The sequence spans 514 residues: Na(+)/H(+) antiporter NhaB (514 aa).

12 helical membrane-spanning segments follow: residues 23–43, 63–83, 97–117, 120–140, 144–164, 202–222, 238–258, 303–323, 357–377, 391–411, 447–467, and 475–495; these read LALI…PFVA, PLLP…TSAA, LLLM…LFIF, LLLS…AAAF, FLDA…FYGI, LMMH…VGEP, FFLR…FTCV, AIIG…VGLI, LTVF…APII, LFYL…VGTI, ATPN…APLI, and VWMA…CVEF.

The protein belongs to the NhaB Na(+)/H(+) (TC 2.A.34) antiporter family.

It is found in the cell inner membrane. The enzyme catalyses 2 Na(+)(in) + 3 H(+)(out) = 2 Na(+)(out) + 3 H(+)(in). Its function is as follows. Na(+)/H(+) antiporter that extrudes sodium in exchange for external protons. The chain is Na(+)/H(+) antiporter NhaB from Citrobacter koseri (strain ATCC BAA-895 / CDC 4225-83 / SGSC4696).